Consider the following 226-residue polypeptide: Exopolysaccharide production protein ExoY (226 aa).

A helical membrane pass occupies residues valine 34–leucine 54.

Belongs to the bacterial sugar transferase family.

The protein localises to the cell membrane. Its pathway is glycan metabolism; exopolysaccharide biosynthesis. In terms of biological role, needed for the addition of the first sugar (galactose) to the isoprenoid carrier. May function as a sugar transferase. This is Exopolysaccharide production protein ExoY (exoY) from Sinorhizobium fredii (strain NBRC 101917 / NGR234).